A 264-amino-acid chain; its full sequence is Movement protein (264 aa).

The disordered stretch occupies residues 211 to 264 (RTKSSKRGPKNNNNLGKGRSGGRPKPKSVDEVEEEFDNLIEDEAETSVADSDSY). A compositionally biased stretch (acidic residues) spans 241–255 (EVEEEFDNLIEDEAE).

The protein belongs to the tobamovirus movement protein family. Binds to host RBCS at the plasmodesmata; this interaction seems required for viral systemic movement. In resistant plants, interacts with host MBP2C at host microtubules; this interaction prevents virus cell to cell movement. In resistant plants, interacts with host resistance (R) protein (e.g. tomato ToMV resistance protein TM-2(2), AC Q71BG9) at the host plasma membrane; this interaction triggers host defense responses leading to programmed cell death.

The protein resides in the host cytoplasm. Its subcellular location is the host cytoskeleton. It is found in the host cell junction. It localises to the host plasmodesma. Functionally, transports viral genome to neighboring plant cells directly through plasmosdesmata, without any budding. The movement protein allows efficient cell to cell propagation, by bypassing the host cell wall barrier. Forms a ribonucleoprotein complex with viral RNA. Binds microtubules and modulates microtubule stability. Can bind double-stranded DNA. Triggers host hypersensitive defense reaction in incompatible plants harboring resistance (R) proteins. The sequence is that of Movement protein (MP) from Antirrhinum majus (Garden snapdragon).